The primary structure comprises 81 residues: Putative sulfur carrier protein VNG_5061C/VNG_5236C/VNG_6059C/VNG_6467C (81 aa).

Residue Cys-18 is the Cysteine persulfide intermediate of the active site.

It belongs to the sulfur carrier protein TusA family.

The protein is Putative sulfur carrier protein VNG_5061C/VNG_5236C/VNG_6059C/VNG_6467C of Halobacterium salinarum (strain ATCC 700922 / JCM 11081 / NRC-1) (Halobacterium halobium).